A 159-amino-acid chain; its full sequence is Cell division protein SepF (159 aa).

Residues 23 to 69 (DYIEEDEEQKPASKSAFDSDHTVTPLASTTAPAASSTTKPFPGGRVN) are disordered. A compositionally biased stretch (low complexity) spans 44 to 64 (TVTPLASTTAPAASSTTKPFP).

The protein belongs to the SepF family. As to quaternary structure, homodimer. Interacts with FtsZ.

Its subcellular location is the cytoplasm. Functionally, cell division protein that is part of the divisome complex and is recruited early to the Z-ring. Probably stimulates Z-ring formation, perhaps through the cross-linking of FtsZ protofilaments. Its function overlaps with FtsA. In Bifidobacterium longum (strain DJO10A), this protein is Cell division protein SepF.